Reading from the N-terminus, the 291-residue chain is Nucleoid occlusion protein (291 aa).

Residues Glu-155–Leu-174 constitute a DNA-binding region (H-T-H motif).

Belongs to the ParB family.

The protein localises to the cytoplasm. The protein resides in the nucleoid. Its function is as follows. Effects nucleoid occlusion by binding relatively nonspecifically to DNA and preventing the assembly of the division machinery in the vicinity of the nucleoid, especially under conditions that disturb the cell cycle. It helps to coordinate cell division and chromosome segregation by preventing the formation of the Z ring through the nucleoid, which would cause chromosome breakage. This Bacillus pumilus (strain SAFR-032) protein is Nucleoid occlusion protein.